The following is a 509-amino-acid chain: Probable basic-leucine zipper transcription factor H (509 aa).

The segment at 1 to 42 (MMNSPRSLDSSDGSVDSSSVYSGTSSFGSSFTSSTGSGFTNS) is disordered. The span at 10 to 39 (SSDGSVDSSSVYSGTSSFGSSFTSSTGSGF) shows a compositional bias: low complexity. In terms of domain architecture, bZIP spans 50-113 (AKKKKIRQMQ…NENYLKINQL (64 aa)). Residues 51 to 77 (KKKKIRQMQNRQSAAQYRERKKEYLEK) are basic motif. The leucine-zipper stretch occupies residues 78-99 (LETIVDNLESDRNQLLQQTKQL). 4 disordered regions span residues 134–185 (LLSK…SNNG), 223–275 (FSHL…SRFN), 290–414 (IENV…IINN), and 465–509 (SNNN…GIPK). Composition is skewed to low complexity over residues 226–248 (LQQQQQQQPQQQNSPQILQSPIP), 255–269 (PIQQISPSSPNQNIN), 292–350 (NVNN…SNRS), 361–414 (QQQQ…IINN), 465–483 (SNNNNSNNNNSGLENNSPS), and 490–509 (NGGINNISSGNLNSLKGIPK).

The protein belongs to the bZIP family.

The protein localises to the nucleus. Its function is as follows. Probable transcriptional regulator. The chain is Probable basic-leucine zipper transcription factor H (bzpH) from Dictyostelium discoideum (Social amoeba).